The primary structure comprises 522 residues: Putative aldehyde dehydrogenase-like protein C21C3 (522 aa).

Glu239 acts as the Proton acceptor in catalysis. The active-site Nucleophile is Cys273.

This sequence belongs to the aldehyde dehydrogenase family.

The protein resides in the cytoplasm. It localises to the nucleus. The chain is Putative aldehyde dehydrogenase-like protein C21C3 from Schizosaccharomyces pombe (strain 972 / ATCC 24843) (Fission yeast).